A 119-amino-acid chain; its full sequence is Large ribosomal subunit protein bL20 (119 aa).

It belongs to the bacterial ribosomal protein bL20 family.

Its function is as follows. Binds directly to 23S ribosomal RNA and is necessary for the in vitro assembly process of the 50S ribosomal subunit. It is not involved in the protein synthesizing functions of that subunit. This Nitrosomonas eutropha (strain DSM 101675 / C91 / Nm57) protein is Large ribosomal subunit protein bL20.